The chain runs to 125 residues: MNHILLVGAGGALGSVLRYLVGLWMLQRAGPAFPWGTLFVNVTGSFLIGFLAEFIMHKMGASPEMRVFLITGVLGGYTTFSAFSLDAIALLEHGQTMSGLAYIVASVGLSMLAVFAGLALMRAMV.

Helical transmembrane passes span 4–24, 32–52, 68–88, and 100–120; these read ILLV…VGLW, AFPW…GFLA, FLIT…LDAI, and LAYI…GLAL. Na(+)-binding residues include G75 and T78.

Belongs to the fluoride channel Fluc/FEX (TC 1.A.43) family.

The protein resides in the cell inner membrane. The enzyme catalyses fluoride(in) = fluoride(out). Na(+) is not transported, but it plays an essential structural role and its presence is essential for fluoride channel function. Functionally, fluoride-specific ion channel. Important for reducing fluoride concentration in the cell, thus reducing its toxicity. This Rhizobium meliloti (strain 1021) (Ensifer meliloti) protein is Fluoride-specific ion channel FluC.